The primary structure comprises 137 residues: Crustacean calcium-binding protein 23 (137 aa).

EF-hand domains are found at residues 27-48 (RDSS…FGLD), 62-97 (EKKA…KVVK), and 100-135 (ATEE…YSGL).

Monomer or disulfide-linked dimers.

Functionally, possibly acts as a regulatory protein and not as a calcium buffer or transport protein. This is Crustacean calcium-binding protein 23 from Homarus americanus (American lobster).